We begin with the raw amino-acid sequence, 230 residues long: MAKVGKNYQEAVKAFDRAALHEPMEALAVVKKIAKAKFDETVEVAFKLGIDTRHADQQIRGALVLPHGTGKTRSVLVFAKGDKAKEAEAAGADFVGAEDMIAKIEQGWFGFDVVVATPDMMGMVGKLGRVLGPKGLMPNPKTGTVTFDVAKAVKEIKAGKIEYRADKAGIIHAPIGKVSFSEEQLYQNYKVLVETLVKAKPAAAKGQYIRSVTVSSTMGPGVRINPVKAN.

The protein belongs to the universal ribosomal protein uL1 family. As to quaternary structure, part of the 50S ribosomal subunit.

In terms of biological role, binds directly to 23S rRNA. The L1 stalk is quite mobile in the ribosome, and is involved in E site tRNA release. Protein L1 is also a translational repressor protein, it controls the translation of the L11 operon by binding to its mRNA. In Desulfitobacterium hafniense (strain DSM 10664 / DCB-2), this protein is Large ribosomal subunit protein uL1.